The sequence spans 433 residues: Homogentisate 1,2-dioxygenase (433 aa).

Catalysis depends on His-288, which acts as the Proton acceptor. Positions 331 and 337 each coordinate Fe cation. The homogentisate site is built by Tyr-346 and His-367. His-367 serves as a coordination point for Fe cation.

It belongs to the homogentisate dioxygenase family. In terms of assembly, hexamer; dimer of trimers. Fe cation is required as a cofactor.

The catalysed reaction is homogentisate + O2 = 4-maleylacetoacetate + H(+). The protein operates within amino-acid degradation; L-phenylalanine degradation; acetoacetate and fumarate from L-phenylalanine: step 4/6. Functionally, involved in the catabolism of homogentisate (2,5-dihydroxyphenylacetate or 2,5-OH-PhAc), a central intermediate in the degradation of phenylalanine and tyrosine. Catalyzes the oxidative ring cleavage of the aromatic ring of homogentisate to yield maleylacetoacetate. The polypeptide is Homogentisate 1,2-dioxygenase (Pseudomonas putida (strain W619)).